A 504-amino-acid polypeptide reads, in one-letter code: ATP synthase subunit alpha (504 aa).

169-176 contacts ATP; it reads GDRKTGKT.

The protein belongs to the ATPase alpha/beta chains family. As to quaternary structure, F-type ATPases have 2 components, CF(1) - the catalytic core - and CF(0) - the membrane proton channel. CF(1) has five subunits: alpha(3), beta(3), gamma(1), delta(1), epsilon(1). CF(0) has three main subunits: a(1), b(2) and c(9-12). The alpha and beta chains form an alternating ring which encloses part of the gamma chain. CF(1) is attached to CF(0) by a central stalk formed by the gamma and epsilon chains, while a peripheral stalk is formed by the delta and b chains.

It is found in the cell membrane. The catalysed reaction is ATP + H2O + 4 H(+)(in) = ADP + phosphate + 5 H(+)(out). In terms of biological role, produces ATP from ADP in the presence of a proton gradient across the membrane. The alpha chain is a regulatory subunit. In Leuconostoc citreum (strain KM20), this protein is ATP synthase subunit alpha.